The sequence spans 228 residues: ATP-dependent dethiobiotin synthetase BioD (228 aa).

Aspartate 13–phenylalanine 18 serves as a coordination point for ATP. Threonine 17 is a binding site for Mg(2+). Lysine 38 is a catalytic residue. Serine 42 lines the substrate pocket. ATP-binding positions include aspartate 55, glutamate 116–glycine 119, asparagine 179–lysine 180, and proline 208–isoleucine 210. Aspartate 55 and glutamate 116 together coordinate Mg(2+).

The protein belongs to the dethiobiotin synthetase family. As to quaternary structure, homodimer. Mg(2+) is required as a cofactor.

The protein localises to the cytoplasm. The enzyme catalyses (7R,8S)-7,8-diammoniononanoate + CO2 + ATP = (4R,5S)-dethiobiotin + ADP + phosphate + 3 H(+). Its pathway is cofactor biosynthesis; biotin biosynthesis; biotin from 7,8-diaminononanoate: step 1/2. Catalyzes a mechanistically unusual reaction, the ATP-dependent insertion of CO2 between the N7 and N8 nitrogen atoms of 7,8-diaminopelargonic acid (DAPA, also called 7,8-diammoniononanoate) to form a ureido ring. The protein is ATP-dependent dethiobiotin synthetase BioD of Clostridium perfringens (strain 13 / Type A).